A 176-amino-acid chain; its full sequence is Peptidyl-prolyl cis-trans isomerase cyp5 (176 aa).

The PPIase cyclophilin-type domain occupies 10-173 (FFDVAVNGKP…AKVEIVDCGE (164 aa)).

The protein belongs to the cyclophilin-type PPIase family.

It catalyses the reaction [protein]-peptidylproline (omega=180) = [protein]-peptidylproline (omega=0). PPIases accelerate the folding of proteins. It catalyzes the cis-trans isomerization of proline imidic peptide bonds in oligopeptides. The polypeptide is Peptidyl-prolyl cis-trans isomerase cyp5 (cyp5) (Rhizopus delemar (strain RA 99-880 / ATCC MYA-4621 / FGSC 9543 / NRRL 43880) (Mucormycosis agent)).